Consider the following 286-residue polypeptide: 4-diphosphocytidyl-2-C-methyl-D-erythritol kinase (286 aa).

K11 is an active-site residue. 93-103 (PFGAGLGGGSS) contacts ATP. Residue D135 is part of the active site.

It belongs to the GHMP kinase family. IspE subfamily.

The enzyme catalyses 4-CDP-2-C-methyl-D-erythritol + ATP = 4-CDP-2-C-methyl-D-erythritol 2-phosphate + ADP + H(+). It functions in the pathway isoprenoid biosynthesis; isopentenyl diphosphate biosynthesis via DXP pathway; isopentenyl diphosphate from 1-deoxy-D-xylulose 5-phosphate: step 3/6. Catalyzes the phosphorylation of the position 2 hydroxy group of 4-diphosphocytidyl-2C-methyl-D-erythritol. The protein is 4-diphosphocytidyl-2-C-methyl-D-erythritol kinase of Chlorobaculum parvum (strain DSM 263 / NCIMB 8327) (Chlorobium vibrioforme subsp. thiosulfatophilum).